A 156-amino-acid chain; its full sequence is Small ribosomal subunit protein uS7 (156 aa).

This sequence belongs to the universal ribosomal protein uS7 family. In terms of assembly, part of the 30S ribosomal subunit. Contacts proteins S9 and S11.

Its function is as follows. One of the primary rRNA binding proteins, it binds directly to 16S rRNA where it nucleates assembly of the head domain of the 30S subunit. Is located at the subunit interface close to the decoding center, probably blocks exit of the E-site tRNA. The sequence is that of Small ribosomal subunit protein uS7 from Mesomycoplasma hyopneumoniae (strain 232) (Mycoplasma hyopneumoniae).